The chain runs to 427 residues: Kallistatin (427 aa).

The signal sequence occupies residues 1 to 20; the sequence is MHLIDYLLLLLVGLLALSHG. 3 N-linked (GlcNAc...) asparagine glycosylation sites follow: Asn-33, Asn-108, and Asn-157. N-linked (GlcNAc...) (complex) asparagine glycosylation occurs at Asn-238.

It belongs to the serpin family. Monomer and some homodimers. Post-translationally, the N-terminus is blocked. Expressed by the liver and secreted in plasma.

It localises to the secreted. Functionally, inhibits human amidolytic and kininogenase activities of tissue kallikrein. Inhibition is achieved by formation of an equimolar, heat- and SDS-stable complex between the inhibitor and the enzyme, and generation of a small C-terminal fragment of the inhibitor due to cleavage at the reactive site by tissue kallikrein. The polypeptide is Kallistatin (SERPINA4) (Homo sapiens (Human)).